The sequence spans 203 residues: dITP/XTP pyrophosphatase (203 aa).

Position 8-13 (8-13) interacts with substrate; sequence TANKGK. The Mg(2+) site is built by Glu-41 and Asp-70. Asp-70 serves as the catalytic Proton acceptor. Residues Ser-71, 153–156, Lys-176, and 181–182 contribute to the substrate site; these read FGYD and HR.

Belongs to the HAM1 NTPase family. In terms of assembly, homodimer. It depends on Mg(2+) as a cofactor.

The enzyme catalyses XTP + H2O = XMP + diphosphate + H(+). The catalysed reaction is dITP + H2O = dIMP + diphosphate + H(+). It carries out the reaction ITP + H2O = IMP + diphosphate + H(+). In terms of biological role, pyrophosphatase that catalyzes the hydrolysis of nucleoside triphosphates to their monophosphate derivatives, with a high preference for the non-canonical purine nucleotides XTP (xanthosine triphosphate), dITP (deoxyinosine triphosphate) and ITP. Seems to function as a house-cleaning enzyme that removes non-canonical purine nucleotides from the nucleotide pool, thus preventing their incorporation into DNA/RNA and avoiding chromosomal lesions. The chain is dITP/XTP pyrophosphatase from Listeria innocua serovar 6a (strain ATCC BAA-680 / CLIP 11262).